The sequence spans 663 residues: Preterminal protein (663 aa).

The Nuclear localization signal motif lies at 367-376 (SLPLPTRRRR). Residues 374-414 (RRRVARPAPPSPSPSPEPVELEMPPLEGEEEEEEEELPPRS) are disordered. Residues 380-390 (PAPPSPSPSPE) are compositionally biased toward pro residues. Residues 400–409 (EGEEEEEEEE) show a composition bias toward acidic residues. O-(5'-phospho-DNA)-serine is present on S575. The interval 632 to 663 (QLQPMPELNDPVQLPPLRPERQRPPLGPRRPL) is disordered.

Belongs to the adenoviridae terminal protein family. As to quaternary structure, heterodimer with the polymerase; this heterodimer binds to bp 9 to 18 of the genome. Interacts with host POU2F1; POU2F1 binds to the auxiliary sequences in the inverted terminal repeats and tethers the pTP-POL heterodimer to the origin DNA thereby participating in the assembly of the pre-initiation complex (POL-TP-DBP-NFIA-POU2F1). Preterminal protein is used to replicate viral genome, upon genomic encapsidation it is processed first into iTP and finally into TP by adenovirus protease.

It localises to the host nucleus matrix. Functionally, protein covalently bound to the viral DNA that acts as a primer for viral genomic replication by DNA strand displacement. Assembles on the viral origin of replication in an initiation complex with viral polymerase, DBP, host NFIA and host POU2F1/OCT1. During initiation, the polymerase covalently couples the first dCTP with Ser-580 of pTP. The terminal protein stimulates the template activity over 20 fold compared to protein-free templates. Neo-synthesized viral genomes are linked to two preterminal proteins, one for each 5' end. These new genomes are encapsidated in the nucleus, and during capsid maturation by viral protease, preterminal protein is first cleaved into intermediary (iTP), then into mature TP. May play a role in host nuclear matrix localization of genomic DNA. This Bos taurus (Bovine) protein is Preterminal protein.